The chain runs to 176 residues: Large ribosomal subunit protein uL10 (176 aa).

The protein belongs to the universal ribosomal protein uL10 family. In terms of assembly, part of the ribosomal stalk of the 50S ribosomal subunit. The N-terminus interacts with L11 and the large rRNA to form the base of the stalk. The C-terminus forms an elongated spine to which L12 dimers bind in a sequential fashion forming a multimeric L10(L12)X complex.

Forms part of the ribosomal stalk, playing a central role in the interaction of the ribosome with GTP-bound translation factors. This chain is Large ribosomal subunit protein uL10, found in Acaryochloris marina (strain MBIC 11017).